Consider the following 391-residue polypeptide: Aspartate aminotransferase (391 aa).

The L-aspartate site is built by Gly-40 and Asn-176. An N6-(pyridoxal phosphate)lysine modification is found at Lys-236. Residue Arg-366 coordinates L-aspartate.

The protein belongs to the class-I pyridoxal-phosphate-dependent aminotransferase family. Homodimer. It depends on pyridoxal 5'-phosphate as a cofactor.

The protein resides in the cytoplasm. The catalysed reaction is L-aspartate + 2-oxoglutarate = oxaloacetate + L-glutamate. This chain is Aspartate aminotransferase (aspC), found in Pyrococcus horikoshii (strain ATCC 700860 / DSM 12428 / JCM 9974 / NBRC 100139 / OT-3).